The following is a 212-amino-acid chain: Probable transaldolase (212 aa).

The active-site Schiff-base intermediate with substrate is the Lys-84.

It belongs to the transaldolase family. Type 3B subfamily.

The protein localises to the cytoplasm. It carries out the reaction D-sedoheptulose 7-phosphate + D-glyceraldehyde 3-phosphate = D-erythrose 4-phosphate + beta-D-fructose 6-phosphate. Its pathway is carbohydrate degradation; pentose phosphate pathway; D-glyceraldehyde 3-phosphate and beta-D-fructose 6-phosphate from D-ribose 5-phosphate and D-xylulose 5-phosphate (non-oxidative stage): step 2/3. Functionally, transaldolase is important for the balance of metabolites in the pentose-phosphate pathway. In Bacillus velezensis (strain DSM 23117 / BGSC 10A6 / LMG 26770 / FZB42) (Bacillus amyloliquefaciens subsp. plantarum), this protein is Probable transaldolase.